The following is a 145-amino-acid chain: D-aminoacyl-tRNA deacylase (145 aa).

Positions Gly137–Pro138 match the Gly-cisPro motif, important for rejection of L-amino acids motif.

The protein belongs to the DTD family. In terms of assembly, homodimer.

The protein localises to the cytoplasm. It carries out the reaction glycyl-tRNA(Ala) + H2O = tRNA(Ala) + glycine + H(+). It catalyses the reaction a D-aminoacyl-tRNA + H2O = a tRNA + a D-alpha-amino acid + H(+). An aminoacyl-tRNA editing enzyme that deacylates mischarged D-aminoacyl-tRNAs. Also deacylates mischarged glycyl-tRNA(Ala), protecting cells against glycine mischarging by AlaRS. Acts via tRNA-based rather than protein-based catalysis; rejects L-amino acids rather than detecting D-amino acids in the active site. By recycling D-aminoacyl-tRNA to D-amino acids and free tRNA molecules, this enzyme counteracts the toxicity associated with the formation of D-aminoacyl-tRNA entities in vivo and helps enforce protein L-homochirality. The protein is D-aminoacyl-tRNA deacylase of Pseudomonas syringae pv. syringae (strain B728a).